We begin with the raw amino-acid sequence, 193 residues long: MILYLASGSPRRAELLQQIAVPFTVLPAPSIDETPRSAEAAVDYVRRMAREKALVGQARMPTPGAVLGADTAVVLGDQILGKPADDTEALAMLTQLSGTSHQVISAVCVCSEGRQAVRHTVTTVQFRPFEAARLEVYVATGEGRDKAGSYGIQGLGGALVESLSGSYSGVVGLPLEQTVELLEWADIPYWQID.

Aspartate 70 (proton acceptor) is an active-site residue.

Belongs to the Maf family. YhdE subfamily. A divalent metal cation is required as a cofactor.

The protein resides in the cytoplasm. It catalyses the reaction dTTP + H2O = dTMP + diphosphate + H(+). The catalysed reaction is UTP + H2O = UMP + diphosphate + H(+). Its function is as follows. Nucleoside triphosphate pyrophosphatase that hydrolyzes dTTP and UTP. May have a dual role in cell division arrest and in preventing the incorporation of modified nucleotides into cellular nucleic acids. This is dTTP/UTP pyrophosphatase from Alcanivorax borkumensis (strain ATCC 700651 / DSM 11573 / NCIMB 13689 / SK2).